Reading from the N-terminus, the 105-residue chain is Antimicrobial peptide 1 (105 aa).

The first 26 residues, 1 to 26 (METKRLAYVMFVLVCLFLAMAQPSQA), serve as a signal peptide directing secretion. Intrachain disulfides connect Cys37–Cys93, Cys47–Cys105, and Cys49–Cys77.

As to expression, detected at higher levels in needles and twigs from canker-resistant seedlings than in needles from canker-susceptible plants. During summer, detected on cankered, healthy and marginal bark. During winter, detected at lower levels in cankered bark and bark from the canker margin than in healthy bark (at protein level).

Its subcellular location is the secreted. It is found in the cell wall. Its function is as follows. Antimicrobial peptide. In Pinus monticola (Western white pine), this protein is Antimicrobial peptide 1.